Consider the following 550-residue polypeptide: Cochlin (550 aa).

Residues 1–24 form the signal peptide; it reads MWASWIPVLCLGVCLLLPPEPVGS. Residues 28-121 enclose the LCCL domain; the sequence is VPIPITCSTR…QMLSRWSASF (94 aa). Cystine bridges form between C34/C50 and C54/C74. N100 carries N-linked (GlcNAc...) asparagine glycosylation. A compositionally biased stretch (polar residues) spans 128–139; it reads SGTQEATGQAVS. Residues 128–158 are disordered; sequence SGTQEATGQAVSTAHPATGKRLKKTPEKKTG. VWFA domains are found at residues 165–350 and 367–537; these read DIAF…VQKL and NIAF…VSDV. N221 and N436 each carry an N-linked (GlcNAc...) asparagine glycan.

Monomer. May form homodimer. Interacts with type II collagen. Interacts with SLC44A2. Interacts with ANXA2. In terms of processing, N-glycosylated.

It localises to the secreted. The protein resides in the extracellular space. Plays a role in the control of cell shape and motility in the trabecular meshwork. The chain is Cochlin (COCH) from Bos taurus (Bovine).